Here is a 269-residue protein sequence, read N- to C-terminus: Staphylococcal secretory antigen ssaA2 (269 aa).

The N-terminal stretch at 1-27 (MKKIATATIATAGFATIAIASGNQAHA) is a signal peptide. 7 consecutive repeat copies span residues 83-85 (YNN), 88-90 (YNN), 91-93 (YNN), 97-99 (YNN), 103-105 (YNN), 106-108 (YSN), and 115-117 (YNN). The segment at 83-115 (YNNYSYNNYNNGYSYNNYSRYNNYSNNNQSYNY) is 7 X 3 AA repeats of Y-[NS]-N. A Peptidase C51 domain is found at 148–269 (MAPSSNGRSI…SQAAGYNFIH (122 aa)).

The protein localises to the secreted. Not known; immunogenic protein. The protein is Staphylococcal secretory antigen ssaA2 (ssaA2) of Staphylococcus aureus (strain MRSA252).